Consider the following 693-residue polypeptide: Glycine--tRNA ligase beta subunit (693 aa).

Belongs to the class-II aminoacyl-tRNA synthetase family. In terms of assembly, tetramer of two alpha and two beta subunits.

The protein resides in the cytoplasm. It catalyses the reaction tRNA(Gly) + glycine + ATP = glycyl-tRNA(Gly) + AMP + diphosphate. The chain is Glycine--tRNA ligase beta subunit from Shouchella clausii (strain KSM-K16) (Alkalihalobacillus clausii).